The primary structure comprises 61 residues: Small ribosomal subunit protein uS14 (61 aa).

C24, C27, C40, and C43 together coordinate Zn(2+).

Belongs to the universal ribosomal protein uS14 family. Zinc-binding uS14 subfamily. In terms of assembly, part of the 30S ribosomal subunit. Contacts proteins S3 and S10. Zn(2+) serves as cofactor.

Binds 16S rRNA, required for the assembly of 30S particles and may also be responsible for determining the conformation of the 16S rRNA at the A site. The protein is Small ribosomal subunit protein uS14 of Parafrankia sp. (strain EAN1pec).